The chain runs to 472 residues: MPIQQLPMMKGMGKDFKNADYIDYLPVNMLATPKEILNSSGYLRSFPGITKRYDMNGVSRGVEYNTAQNAVYRVCGGKLYKGESEVGDVAGSGRVSMAHGRTSQAVGVNGQLVEYRYDGTVKTVSNWPADSGFTQYELGSVRDITRLRGRYAWSKDGTDSWFITDLEDESHPDRYSAQYRAESQPDGIIGIGTWRDFIVCFGSSTIEYFSLTGATTAGAALYVAQPSLMVQKGIAGTYCKTPFADSYAFISHPATGAPSVYIIGSGQASPIATASIEKIIRSYTAEEMATGVMETLRFDSHELLIIHLPRHVLVYDASSSQNGPQWCVLKTGLYDDVYRGVDFMYEGNQITCGDKSEAVVGQLQFDISSQYDKQQEHLLFTPLFKADNARCFDLEVESSTGVAQYADRLFLSATTDGINYGREQMIEQNEPFVYDKRVLWKRVGRIRRLIGFKLRVITKSPVTLSGCQIRLE.

Monomer (in solution). Hexamer; assembles as a hexamer onto the dodecamer formed by the head-to-tail adapter gp4. Interacts with the head-to-tail adapter protein gp4; each gp10 monomer contacts 2 head-to-tail adapter protein gp4. Interacts with the tail needle protein gp26. Interacts with the tail spike protein gp9; binds six tail spike trimers.

It localises to the virion. Its function is as follows. Acts as a tail hub by assembling onto the head-to-tail adapter protein gp4, generating a channel that is sealed by the tail needle protein gp26. Together with gp4 and gp26, gp10 is required for stabilization of the condensed DNA within the capsid; perhaps by plugging the hole through which the DNA enters. This Salmonella phage P22 (Bacteriophage P22) protein is Tail hub protein gp10 (10).